A 222-amino-acid chain; its full sequence is Glutathione S-transferase A2 (222 aa).

The residue at position 2 (Ala-2) is an N-acetylalanine. One can recognise a GST N-terminal domain in the interval 3–83 (EKPKLHYSNI…YIASKYNLYG (81 aa)). Position 4 is an N6-succinyllysine (Lys-4). Residues Tyr-9, Arg-45, 54 to 55 (QV), and 67 to 68 (QT) each bind glutathione. The region spanning 85-207 (DIKEKALIDM…LQPGSPRKPP (123 aa)) is the GST C-terminal domain. Positions 199-222 (QPGSPRKPPMDEKSLEESRKIFRF) are disordered. The segment covering 206 to 222 (PPMDEKSLEESRKIFRF) has biased composition (basic and acidic residues).

The protein belongs to the GST superfamily. Alpha family. In terms of assembly, homodimer or heterodimer of GSTA1 and GSTA2. As to expression, liver.

It is found in the cytoplasm. The enzyme catalyses RX + glutathione = an S-substituted glutathione + a halide anion + H(+). Catalyzes the conjugation of glutathione to a large variety of electrophilic compounds. This Homo sapiens (Human) protein is Glutathione S-transferase A2 (GSTA2).